A 1049-amino-acid chain; its full sequence is Self-sufficient cytochrome P450 monooxygenase CYP505E4 (1049 aa).

Cysteine 405 provides a ligand contact to heme. Residues 462-492 are disordered; that stretch reads ATALSQHNMSAGATSSPGSSAHPAGNKNAQD. The span at 471 to 486 shows a compositional bias: low complexity; the sequence is SAGATSSPGSSAHPAG. One can recognise a Flavodoxin-like domain in the interval 499–640; sequence ISFFYGSNSG…DLEVWEETNL (142 aa). FMN is bound by residues 505–509 and 584–616; these read SNSGT and VFGCGHQDWTKTFYRIPILIDDLMHKAGATRLT. An FAD-binding FR-type domain is found at 678–906; that stretch reads RDLIEGKVTA…RPAKEAFHLP (229 aa).

It in the N-terminal section; belongs to the cytochrome P450 family. Requires FAD as cofactor. FMN serves as cofactor. The cofactor is heme.

The enzyme catalyses 2 oxidized [cytochrome P450] + NADPH = 2 reduced [cytochrome P450] + NADP(+) + H(+). It catalyses the reaction an organic molecule + reduced [NADPH--hemoprotein reductase] + O2 = an alcohol + oxidized [NADPH--hemoprotein reductase] + H2O + H(+). The catalysed reaction is dodecanoate + reduced [NADPH--hemoprotein reductase] + O2 = 5-hydroxydodecanoate + oxidized [NADPH--hemoprotein reductase] + H2O + H(+). It carries out the reaction tetradecanoate + reduced [NADPH--hemoprotein reductase] + O2 = 7-hydroxytetradecanoate + oxidized [NADPH--hemoprotein reductase] + H2O + H(+). The enzyme catalyses dodecan-1-ol + reduced [NADPH--hemoprotein reductase] + O2 = 1,5-dodecanediol + oxidized [NADPH--hemoprotein reductase] + H2O + H(+). It catalyses the reaction dodecan-1-ol + reduced [NADPH--hemoprotein reductase] + O2 = 1,4-dodecanediol + oxidized [NADPH--hemoprotein reductase] + H2O + H(+). The catalysed reaction is dodecan-1-ol + reduced [NADPH--hemoprotein reductase] + O2 = 1,6-dodecanediol + oxidized [NADPH--hemoprotein reductase] + H2O + H(+). Self-sufficient cytochrome P450 monooxygenase that catalyzes the regioselective in-chain hydroxylation of alkanes, fatty alcohols, and fatty acids at the omega-7 position. Performs hydroxylation of C10-C16 n-alkanes and C12 and C14 fatty alcohols; and thereby enables the one step biocatalytic synthesis of rare alcohols such as 5-dodecanol and 7-tetradecanol. Converts 1-dodecanol into 1,5-dodecanediol as major product with very little sub-terminally hydroxylated products with the 1,4-dodecanediol and 1,6-dodecanediol more abundant. Converts dodecanoic acid to 5-hydroxydodecanoic acid which can be further converted into delta-dodecalactone by lactonization of the 5-hydroxy acid at low pH. Also gives sub-terminal hydroxylation of dodecanoic acid with 9-hydroxydodecanoic acid being the second most abundant product. This is Self-sufficient cytochrome P450 monooxygenase CYP505E4 from Penicillium freii.